The sequence spans 480 residues: Proline--tRNA ligase (480 aa).

It belongs to the class-II aminoacyl-tRNA synthetase family. ProS type 3 subfamily. In terms of assembly, homodimer.

It is found in the cytoplasm. The enzyme catalyses tRNA(Pro) + L-proline + ATP = L-prolyl-tRNA(Pro) + AMP + diphosphate. Catalyzes the attachment of proline to tRNA(Pro) in a two-step reaction: proline is first activated by ATP to form Pro-AMP and then transferred to the acceptor end of tRNA(Pro). In Roseiflexus castenholzii (strain DSM 13941 / HLO8), this protein is Proline--tRNA ligase.